The sequence spans 189 residues: Interferon alpha-A (189 aa).

Positions 1–23 (MAPAWSFLLSLLLLSCNAICSLG) are cleaved as a signal peptide. 2 disulfides stabilise this stretch: C24–C122 and C52–C162.

Belongs to the alpha/beta interferon family.

Its subcellular location is the secreted. Its function is as follows. Produced by macrophages, IFN-alpha have antiviral activities. Interferon stimulates the production of two enzymes: a protein kinase and an oligoadenylate synthetase. The sequence is that of Interferon alpha-A (IFNAA) from Bos taurus (Bovine).